A 738-amino-acid polypeptide reads, in one-letter code: MDKRVRGSWALGGQSEVDLDYHKILTAGLSVQQGIVRQRVIPVYVVSDLEGICQHIIQAFEAGVDFQDNADSFLLLLCLHHAYQGDHRLFLKSDAVQYLEGHGFRFEVREKENVHRLDELLPNVTGGKNLRRTLAAMPEEETTEANAGQFLSFASLFLPKLVVGEKACLEKVQRQIQVHAEQGLIQYPTSWQSVGHMMVIFRLMRTNFLIKFLLIHQGMHMVAGHDANDTVISNSVAQARFSGLLIVKTVLDHILQKTDLGVRLHPLARTAKVKNEVSSFKAALGSLAKHGEYAPFARLLNLSGVNNLEHGLYPQLSAIALGVATAHGSTLAGVNVGEQYQQLREAATEAEKQLQQYAETRELDNLGLDEQEKKILMSFHQKKNEISFQQTNAMVTLRKERLAKLTEAITTASKIKVGDRYPDDNDIPFPGPIYDETHPNPSDDNPDDSRDTTIPGGVVDPYDDESNNYPDYEDSAEGTTGDLDLFNLDDDDDDSQPGPPDRGQSKERAARTHGLQDPTLDGAKKVPELTPGSHQPGNLHITKPGSNTNQPQGNMSSTLQSMTPIQEESEPDDQKDDDDESLTSLDSEGDEDVESVSGENNPTVAPPAPVYKDTGVDTNQQNGPSNAVDGQGSESEALPINPEKGSALEETYYHLLKTQGPFEAINYYHLMSDEPIAFSTESGKEYIFPDSLEEAYPPWLSEKEALEKENRYLVIDGQQFLWPVMSLQDKFLAVLQHD.

The stretch at 334 to 363 (VNVGEQYQQLREAATEAEKQLQQYAETREL) forms a coiled coil. The tract at residues 418–640 (GDRYPDDNDI…QGSESEALPI (223 aa)) is disordered. A compositionally biased stretch (acidic residues) spans 461 to 476 (PYDDESNNYPDYEDSA). A compositionally biased stretch (polar residues) spans 544–564 (PGSNTNQPQGNMSSTLQSMTP). Residues 567-594 (EESEPDDQKDDDDESLTSLDSEGDEDVE) are compositionally biased toward acidic residues. The segment covering 616 to 625 (VDTNQQNGPS) has biased composition (polar residues).

This sequence belongs to the filoviruses nucleoprotein family. In terms of assembly, homooligomer. Homomultimerizes to form the nucleocapsid. Binds to viral genomic RNA. Interacts with VP35 and VP30 to form the nucleocapsid. Interacts with host PPP2R5C; this interaction leads to VP30 dephosphorylation and viral transcription. Interacts with VP24; this interaction facilitates nucleocapsid assembly and genome packaging. Interacts with matrix protein VP40; this interaction allows recruitment of the nucleocapsid into progeny virions. Interacts with host STAU1. Interacts with host NXF1 (via RNA-binding domain); this interaction recruits NXF1 to the inclusion bodies were viral replication takes place, probably to export viral mRNA-NXF1 complexes from these sites. Interacts with host CCDC92; this interaction sequesters NP in the host cytoplasm. Interacts with host TRIM14. Post-translationally, phosphorylated and O-glycosylated by host. Acetylated by host EP300 in vitro.

It is found in the virion. Its subcellular location is the host cytoplasm. In terms of biological role, oligomerizes into helical capsid to encapsidate the viral genome, protecting it from nucleases and the cellular innate immune response. VP35 binds to and stabilizes monomeric NP, keeping it soluble. Upon virus replication, NP is recruited to bind cooperatively viral genomic RNA and VP35 is released. The encapsidated genomic RNA is termed the nucleocapsid and serves as template for transcription and replication. The nucleocapsid is helical with a pitch of 10.81 NP per turn and a diameter of about 22nm. Each NP binds to six nucleotides of viral genomic RNA, three being exposed to the solvant and three hidden into the nucleocapsid. Also recruits host PPP2R5C phosphatase to dephosphorylate VP30 and thereby promote viral transcription. Upon virion assembly and budding, NP binds to VP24 and possibly host STAU1. The chain is Nucleoprotein (NP) from Sudan ebolavirus (strain Human/Uganda/Gulu/2000) (SEBOV).